The following is a 158-amino-acid chain: Small ribosomal subunit protein uS13 (158 aa).

The protein belongs to the universal ribosomal protein uS13 family. Part of the 30S ribosomal subunit. Forms a loose heterodimer with protein S19. Forms two bridges to the 50S subunit in the 70S ribosome.

Its function is as follows. Located at the top of the head of the 30S subunit, it contacts several helices of the 16S rRNA. In the 70S ribosome it contacts the 23S rRNA (bridge B1a) and protein L5 of the 50S subunit (bridge B1b), connecting the 2 subunits; these bridges are implicated in subunit movement. The polypeptide is Small ribosomal subunit protein uS13 (Picrophilus torridus (strain ATCC 700027 / DSM 9790 / JCM 10055 / NBRC 100828 / KAW 2/3)).